A 160-amino-acid polypeptide reads, in one-letter code: 3-dehydroquinate dehydratase (160 aa).

Tyr22 (proton acceptor) is an active-site residue. Substrate contacts are provided by Asn73, His79, and Asp86. His99 functions as the Proton donor in the catalytic mechanism. Residues 100–101 (IS) and Arg110 each bind substrate.

This sequence belongs to the type-II 3-dehydroquinase family. In terms of assembly, homododecamer.

The catalysed reaction is 3-dehydroquinate = 3-dehydroshikimate + H2O. Its pathway is metabolic intermediate biosynthesis; chorismate biosynthesis; chorismate from D-erythrose 4-phosphate and phosphoenolpyruvate: step 3/7. Functionally, catalyzes a trans-dehydration via an enolate intermediate. The polypeptide is 3-dehydroquinate dehydratase (Sulfurimonas denitrificans (strain ATCC 33889 / DSM 1251) (Thiomicrospira denitrificans (strain ATCC 33889 / DSM 1251))).